The following is a 627-amino-acid chain: (-)-alpha-pinene synthase 1, chloroplastic (627 aa).

A chloroplast-targeting transit peptide spans 1-36 (MALVSIAPLASKSCLHKSLSSSAHELKTICRTIPTL). Mg(2+) is bound by residues Asp378, Asp382, and Asp530. The DDXXD motif motif lies at 378–382 (DDMYD).

Belongs to the terpene synthase family. Tpsd subfamily. Requires Mg(2+) as cofactor. Mn(2+) is required as a cofactor.

Its subcellular location is the plastid. The protein localises to the chloroplast. It carries out the reaction (2E)-geranyl diphosphate = (1S,5S)-beta-pinene + diphosphate. The catalysed reaction is (2E)-geranyl diphosphate = (1S,5S)-alpha-pinene + diphosphate. The protein operates within terpene metabolism; oleoresin biosynthesis. Terpene synthase (TPS) involved in the biosynthesis of monoterpene natural products included in conifer oleoresin secretions and volatile emissions; these compounds contribute to biotic and abiotic stress defense against herbivores and pathogens. Catalyzes the conversion of (2E)-geranyl diphosphate (GPP) to (1S,5S)-beta-pinene. The protein is (-)-alpha-pinene synthase 1, chloroplastic of Picea sitchensis (Sitka spruce).